We begin with the raw amino-acid sequence, 147 residues long: Large ribosomal subunit protein bL9 (147 aa).

The protein belongs to the bacterial ribosomal protein bL9 family.

Functionally, binds to the 23S rRNA. This Clostridium novyi (strain NT) protein is Large ribosomal subunit protein bL9.